The sequence spans 403 residues: Phosphopentomutase (403 aa).

Positions 13, 298, 303, 339, 340, and 351 each coordinate Mn(2+).

Belongs to the phosphopentomutase family. Mn(2+) serves as cofactor.

The protein resides in the cytoplasm. It catalyses the reaction 2-deoxy-alpha-D-ribose 1-phosphate = 2-deoxy-D-ribose 5-phosphate. The enzyme catalyses alpha-D-ribose 1-phosphate = D-ribose 5-phosphate. It functions in the pathway carbohydrate degradation; 2-deoxy-D-ribose 1-phosphate degradation; D-glyceraldehyde 3-phosphate and acetaldehyde from 2-deoxy-alpha-D-ribose 1-phosphate: step 1/2. Isomerase that catalyzes the conversion of deoxy-ribose 1-phosphate (dRib-1-P) and ribose 1-phosphate (Rib-1-P) to deoxy-ribose 5-phosphate (dRib-5-P) and ribose 5-phosphate (Rib-5-P), respectively. In Streptococcus pyogenes serotype M4 (strain MGAS10750), this protein is Phosphopentomutase.